The sequence spans 354 residues: Anthranilate phosphoribosyltransferase (354 aa).

Residues Gly94, 97–98 (GD), Thr102, 104–107 (NIST), 122–130 (KHGNRAASS), and Ser134 each bind 5-phospho-alpha-D-ribose 1-diphosphate. An anthranilate-binding site is contributed by Gly94. Ser106 lines the Mg(2+) pocket. Asn125 contacts anthranilate. Arg180 lines the anthranilate pocket. The Mg(2+) site is built by Asp238 and Glu239.

The protein belongs to the anthranilate phosphoribosyltransferase family. In terms of assembly, homodimer. Mg(2+) serves as cofactor.

The catalysed reaction is N-(5-phospho-beta-D-ribosyl)anthranilate + diphosphate = 5-phospho-alpha-D-ribose 1-diphosphate + anthranilate. Its pathway is amino-acid biosynthesis; L-tryptophan biosynthesis; L-tryptophan from chorismate: step 2/5. In terms of biological role, catalyzes the transfer of the phosphoribosyl group of 5-phosphorylribose-1-pyrophosphate (PRPP) to anthranilate to yield N-(5'-phosphoribosyl)-anthranilate (PRA). This chain is Anthranilate phosphoribosyltransferase, found in Streptomyces griseus subsp. griseus (strain JCM 4626 / CBS 651.72 / NBRC 13350 / KCC S-0626 / ISP 5235).